The chain runs to 253 residues: MATNNGDVLMLEATPEAARPWASAANAEVIDALPYIDDDYGNPLIKSEVDRLVEEEMRRSSKKPADFLKDLPPLPKFDFKNCPVLGKEYERVRAGKPPVRIDFESRYKLEMPPANKRNDDAAWKQYLQKNQRSLQQKLIELENLELMSKLGPELWRQNNHRLEVFLTRMQRLAQEQNEEIEKVNRERKYHQQTTSYELNALSQEWRQLCVKNMEIQSACAMLETQIDSFKKEAAERGWNLEEKLENVEPLQMQ.

Residues 124 to 235 (KQYLQKNQRS…IDSFKKEAAE (112 aa)) adopt a coiled-coil conformation.

Belongs to the SPF27 family. In terms of assembly, component of the multiprotein assembly MOS4-associated complex (MAC) at least composed of MOS4, CDC5 and PRL1. Interacts with CYCL1-1 and CDC5. Associated with the spliceosome. Interacts with ENY2.

It localises to the nucleus. Component of the MAC complex that probably regulates defense responses through transcriptional control and thereby is essential for plant innate immunity. Involved in mRNA splicing. The polypeptide is Pre-mRNA-splicing factor SPF27 homolog (MOS4) (Arabidopsis thaliana (Mouse-ear cress)).